Reading from the N-terminus, the 80-residue chain is SPbeta prophage-derived uncharacterized HTH-type transcriptional regulator YotL (80 aa).

The region spanning 12-67 (LNELMHEYSVSIEDLVECTGLSKQRINDYVGGFKSNMNIGTAMTFADAIGCSIEEL) is the HTH cro/C1-type domain. The segment at residues 23-42 (IEDLVECTGLSKQRINDYVG) is a DNA-binding region (H-T-H motif).

This Bacillus subtilis (strain 168) protein is SPbeta prophage-derived uncharacterized HTH-type transcriptional regulator YotL (yotL).